We begin with the raw amino-acid sequence, 1129 residues long: Tyrosine-protein kinase JAK2 (1129 aa).

An FERM domain is found at 35 to 378; sequence PLLQVYLYYS…GYYRLTADAH (344 aa). Phosphotyrosine; by autocatalysis is present on Tyr-117. Positions 399-480 constitute an SH2; atypical domain; it reads HGPIFMDFAI…NLKDLLTCYQ (82 aa). Protein kinase domains lie at 542–806 and 846–1118; these read LIFE…NSLF and LKFL…DLAQ. 852–860 is an ATP binding site; it reads LGKGNFGSV. Tyr-865 carries the phosphotyrosine; by autocatalysis modification. Lys-879 lines the ATP pocket. 2 positions are modified to phosphotyrosine; by autocatalysis: Tyr-963 and Tyr-969. The active-site Proton acceptor is Asp-973. A phosphotyrosine; by autocatalysis mark is found at Tyr-1004 and Tyr-1005.

Belongs to the protein kinase superfamily. Tyr protein kinase family. JAK subfamily. Autophosphorylated, leading to regulate its activity.

It localises to the endomembrane system. Its subcellular location is the nucleus. The enzyme catalyses L-tyrosyl-[protein] + ATP = O-phospho-L-tyrosyl-[protein] + ADP + H(+). Its activity is regulated as follows. Regulated by autophosphorylation, can both activate or decrease activity. Heme regulates its activity by enhancing the phosphorylation on Tyr-1004 and Tyr-1005. Functionally, non-receptor tyrosine kinase involved in various processes such as cell growth, development, differentiation or histone modifications. Mediates essential signaling events in both innate and adaptive immunity. In the cytoplasm, plays a pivotal role in signal transduction via its association with cytokine receptors. Following ligand-binding to cell surface receptors, phosphorylates specific tyrosine residues on the cytoplasmic tails of the receptor, creating docking sites for STATs proteins. Subsequently, phosphorylates the STATs proteins once they are recruited to the receptor. Phosphorylated STATs then form homodimer or heterodimers and translocate to the nucleus to activate gene transcription. For example, cell stimulation with erythropoietin (EPO) during erythropoiesis leads to JAK2 autophosphorylation, activation, and its association with erythropoietin receptor (EPOR) that becomes phosphorylated in its cytoplasmic domain. Then, STAT5 (STAT5A or STAT5B) is recruited, phosphorylated and activated by JAK2. Once activated, dimerized STAT5 translocates into the nucleus and promotes the transcription of several essential genes involved in the modulation of erythropoiesis. Part of a signaling cascade that is activated by increased cellular retinol and that leads to the activation of STAT5 (STAT5A or STAT5B). In the nucleus, plays a key role in chromatin by specifically mediating phosphorylation of 'Tyr-41' of histone H3 (H3Y41ph), a specific tag that promotes exclusion of CBX5 (HP1 alpha) from chromatin. Up-regulates the potassium voltage-gated channel activity of KCNA3. The sequence is that of Tyrosine-protein kinase JAK2 from Gallus gallus (Chicken).